Consider the following 426-residue polypeptide: DNA polymerase processivity factor component A20 (426 aa).

The protein belongs to the poxviruses A20 family. Interacts with the DNA polymerase catalytic subunit E9. Interacts with UDG. Component of the Uracil-DNA glycosylase(UDG)-A20-polymerase complex; A20 and UDG form a heterodimeric processivity factor that associates with E9 to form the processive polymerase holoenzyme. Interacts with D5.

Plays an essential role in viral DNA replication by acting as the polymerase processivity factor together with protein D4. May serve as a bridge which links the DNA polymerase E9 and the uracil DNA glycosylase. This Vaccinia virus (strain Ankara) (VACV) protein is DNA polymerase processivity factor component A20.